A 164-amino-acid polypeptide reads, in one-letter code: OV-17 antigen (164 aa).

An N-terminal signal peptide occupies residues 1 to 16 (MKFVILLTIGLLVVAA). The interval 24-43 (QQQQQQQQQRDEREIPPFLE) is disordered.

Belongs to the SXP/RAL-2 family. As to expression, high levels in the hypodermal layer of the adult female.

This is OV-17 antigen (OV17) from Onchocerca volvulus.